A 77-amino-acid polypeptide reads, in one-letter code: U8-lycotoxin-Ls1q (77 aa).

A signal peptide spans Met1–Ala20. The propeptide occupies Gln21–Lys26.

This sequence belongs to the neurotoxin 19 (CSTX) family. 08 (U8-Lctx) subfamily. Post-translationally, contains 4 disulfide bonds. In terms of tissue distribution, expressed by the venom gland.

It localises to the secreted. The chain is U8-lycotoxin-Ls1q from Lycosa singoriensis (Wolf spider).